The sequence spans 225 residues: Ribose-5-phosphate isomerase A (225 aa).

Substrate contacts are provided by residues 26–29 (TGST), 82–85 (DGAD), and 95–98 (KGGG). Catalysis depends on Glu104, which acts as the Proton acceptor. Residue Lys122 participates in substrate binding.

It belongs to the ribose 5-phosphate isomerase family. As to quaternary structure, homodimer.

It carries out the reaction aldehydo-D-ribose 5-phosphate = D-ribulose 5-phosphate. It participates in carbohydrate degradation; pentose phosphate pathway; D-ribose 5-phosphate from D-ribulose 5-phosphate (non-oxidative stage): step 1/1. In terms of biological role, catalyzes the reversible conversion of ribose-5-phosphate to ribulose 5-phosphate. The chain is Ribose-5-phosphate isomerase A from Streptococcus gordonii (strain Challis / ATCC 35105 / BCRC 15272 / CH1 / DL1 / V288).